A 115-amino-acid polypeptide reads, in one-letter code: MGTRLLGCAALCLLAADSFHAKVTQTPGHLVKGKGQKTKMDCTPEKGHTFVYWYQQNQNKEFMLLISFQNEQVLQETEMHKKRFSSQCPKNAPCSLAILSSEPGDTALYLCASSQ.

An N-terminal signal peptide occupies residues 1 to 21 (MGTRLLGCAALCLLAADSFHA). The Ig-like domain occupies 22–115 (KVTQTPGHLV…TALYLCASSQ (94 aa)). A disulfide bridge links cysteine 42 with cysteine 111.

In terms of assembly, alpha-beta TR is a heterodimer composed of an alpha and beta chain; disulfide-linked. The alpha-beta TR is associated with the transmembrane signaling CD3 coreceptor proteins to form the TR-CD3 (TcR or TCR). The assembly of alpha-beta TR heterodimers with CD3 occurs in the endoplasmic reticulum where a single alpha-beta TR heterodimer associates with one CD3D-CD3E heterodimer, one CD3G-CD3E heterodimer and one CD247 homodimer forming a stable octameric structure. CD3D-CD3E and CD3G-CD3E heterodimers preferentially associate with TR alpha and TR beta chains, respectively. The association of the CD247 homodimer is the last step of TcR assembly in the endoplasmic reticulum and is required for transport to the cell surface.

Its subcellular location is the cell membrane. Its function is as follows. Probable non-functional open reading frame (ORF) of V region of the variable domain of T cell receptor (TR) beta chain. Non-functional ORF generally cannot participate in the synthesis of a productive T cell receptor (TR) chain due to altered V-(D)-J or switch recombination and/or splicing site (at mRNA level) and/or conserved amino acid change (protein level). Alpha-beta T cell receptors are antigen specific receptors which are essential to the immune response and are present on the cell surface of T lymphocytes. Recognize peptide-major histocompatibility (MH) (pMH) complexes that are displayed by antigen presenting cells (APC), a prerequisite for efficient T cell adaptive immunity against pathogens. Binding of alpha-beta TR to pMH complex initiates TR-CD3 clustering on the cell surface and intracellular activation of LCK that phosphorylates the ITAM motifs of CD3G, CD3D, CD3E and CD247 enabling the recruitment of ZAP70. In turn ZAP70 phosphorylates LAT, which recruits numerous signaling molecules to form the LAT signalosome. The LAT signalosome propagates signal branching to three major signaling pathways, the calcium, the mitogen-activated protein kinase (MAPK) kinase and the nuclear factor NF-kappa-B (NF-kB) pathways, leading to the mobilization of transcription factors that are critical for gene expression and essential for T cell growth and differentiation. The T cell repertoire is generated in the thymus, by V-(D)-J rearrangement. This repertoire is then shaped by intrathymic selection events to generate a peripheral T cell pool of self-MH restricted, non-autoaggressive T cells. Post-thymic interaction of alpha-beta TR with the pMH complexes shapes TR structural and functional avidity. In Homo sapiens (Human), this protein is Probable non-functional T cell receptor beta variable 23-1.